We begin with the raw amino-acid sequence, 410 residues long: Multifunctional CCA protein (410 aa).

The ATP site is built by Gly8 and Arg11. Positions 8 and 11 each coordinate CTP. Residues Glu21 and Asp23 each coordinate Mg(2+). The ATP site is built by Arg91, Arg137, and Arg140. CTP-binding residues include Arg91, Arg137, and Arg140. In terms of domain architecture, HD spans Thr228–Phe329.

This sequence belongs to the tRNA nucleotidyltransferase/poly(A) polymerase family. Bacterial CCA-adding enzyme type 1 subfamily. As to quaternary structure, monomer. Can also form homodimers and oligomers. It depends on Mg(2+) as a cofactor. Requires Ni(2+) as cofactor.

The enzyme catalyses a tRNA precursor + 2 CTP + ATP = a tRNA with a 3' CCA end + 3 diphosphate. It carries out the reaction a tRNA with a 3' CCA end + 2 CTP + ATP = a tRNA with a 3' CCACCA end + 3 diphosphate. Catalyzes the addition and repair of the essential 3'-terminal CCA sequence in tRNAs without using a nucleic acid template. Adds these three nucleotides in the order of C, C, and A to the tRNA nucleotide-73, using CTP and ATP as substrates and producing inorganic pyrophosphate. tRNA 3'-terminal CCA addition is required both for tRNA processing and repair. Also involved in tRNA surveillance by mediating tandem CCA addition to generate a CCACCA at the 3' terminus of unstable tRNAs. While stable tRNAs receive only 3'-terminal CCA, unstable tRNAs are marked with CCACCA and rapidly degraded. The sequence is that of Multifunctional CCA protein from Legionella pneumophila (strain Paris).